Consider the following 58-residue polypeptide: DNA-binding protein (58 aa).

2 stretches are compositionally biased toward basic residues: residues 1-19 (MVRRRRSRSPYRRRSRSRS) and 28-58 (SRYRSRSRSRSRSRSRARSRSPYHHHINQYI). A disordered region spans residues 1–58 (MVRRRRSRSPYRRRSRSRSRSGSDRSRSRYRSRSRSRSRSRSRARSRSPYHHHINQYI).

Probably phosphorylated in infected cells.

It localises to the virion. Thought to be responsible for DNA condensation during packaging of the nucleocapsids. The protein is DNA-binding protein (P7.3) of Cryptophlebia leucotreta granulosis virus (ClGV).